We begin with the raw amino-acid sequence, 582 residues long: Tetratricopeptide repeat protein 24 (582 aa).

Residues 1–31 (MSSPNPEDVPRRPEPEPSSSNKKKKKRKWLR) are disordered. TPR repeat units follow at residues 36-69 (IQAL…ASKA), 79-112 (QACA…EKAQ), 117-150 (GDQC…YQPQ), 154-187 (GEAW…YAQE), 236-271 (GHLY…VPGE), 273-306 (ATVL…HGSV), 313-346 (GRSF…ARDS), and 353-386 (WQAC…CQKE). 2 disordered regions span residues 418–481 (TSAP…RAGP) and 548–582 (VPNG…CTIV). Positions 441-454 (GSSTAGVQHRSSSG) are enriched in polar residues. The span at 462 to 472 (EGHQKKKEERS) shows a compositional bias: basic and acidic residues.

The polypeptide is Tetratricopeptide repeat protein 24 (TTC24) (Homo sapiens (Human)).